A 972-amino-acid polypeptide reads, in one-letter code: 116 kDa U5 small nuclear ribonucleoprotein component (972 aa).

The interval 1-53 (MDTDLYDEFGNYIGPELDSDDEDDELGRESKELDELEDDDDDDDMGDHDEDHP) is disordered. 2 stretches are compositionally biased toward acidic residues: residues 17–26 (LDSDDEDDEL) and 34–48 (DELEDDDDDDDMGDH). In terms of domain architecture, tr-type G spans 127–409 (ELIRNVTLCG…GIHLTKEELK (283 aa)). Residues 136–143 (GHLHHGKT), 204–208 (DTPGH), and 258–261 (NKID) each bind GTP.

The protein belongs to the TRAFAC class translation factor GTPase superfamily. Classic translation factor GTPase family. EF-G/EF-2 subfamily. In terms of assembly, component of the U5 snRNP and the U4/U6-U5 tri-snRNP complex, a building block of the spliceosome. Component of the pre-catalytic, catalytic and post-catalytic spliceosome complexes. Component of the minor spliceosome, which splices U12-type introns.

Its subcellular location is the nucleus. Required for pre-mRNA splicing as component of the spliceosome, including pre-catalytic, catalytic and post-catalytic spliceosomal complexes. Component of the U5 snRNP and the U4/U6-U5 tri-snRNP complex, a building block of the spliceosome. As a component of the minor spliceosome, involved in the splicing of U12-type introns in pre-mRNAs. The sequence is that of 116 kDa U5 small nuclear ribonucleoprotein component (EFTUD2) from Gallus gallus (Chicken).